Here is a 206-residue protein sequence, read N- to C-terminus: dITP/XTP pyrophosphatase (206 aa).

7 to 12 provides a ligand contact to substrate; it reads SSHGYK. The active-site Proton acceptor is aspartate 70. Position 70 (aspartate 70) interacts with Mg(2+). Substrate contacts are provided by residues threonine 71, 154–157, lysine 177, and 182–183; these read FGYD and HR.

The protein belongs to the HAM1 NTPase family. Homodimer. Mg(2+) serves as cofactor.

The catalysed reaction is XTP + H2O = XMP + diphosphate + H(+). It carries out the reaction dITP + H2O = dIMP + diphosphate + H(+). It catalyses the reaction ITP + H2O = IMP + diphosphate + H(+). Functionally, pyrophosphatase that catalyzes the hydrolysis of nucleoside triphosphates to their monophosphate derivatives, with a high preference for the non-canonical purine nucleotides XTP (xanthosine triphosphate), dITP (deoxyinosine triphosphate) and ITP. Seems to function as a house-cleaning enzyme that removes non-canonical purine nucleotides from the nucleotide pool, thus preventing their incorporation into DNA/RNA and avoiding chromosomal lesions. The sequence is that of dITP/XTP pyrophosphatase from Chlamydia abortus (strain DSM 27085 / S26/3) (Chlamydophila abortus).